A 101-amino-acid chain; its full sequence is Enhancer of yellow 2 transcription factor (101 aa).

Belongs to the ENY2 family. As to quaternary structure, component of the nuclear pore complex (NPC)-associated AMEX complex (anchoring and mRNA export complex), composed of at least e(y)2 and xmas-2. Component of the SAGA transcription coactivator-HAT complexes, at least composed of Ada2b, e(y)2, Pcaf/Gcn5, Taf10 and Nipped-A/Trrap. Within the SAGA complex, e(y)2, Sgf11, and not/nonstop form an additional subcomplex of SAGA called the DUB module (deubiquitination module). Component of the THO complex, composed of at least e(y)2, HPR1, THO2, THOC5, THOC6 and THOC7. Interacts with e(y)1. Interacts with su(Hw) (via zinc fingers). Interacts with xmas-2; required for localization to the nuclear periphery. Interacts with the nuclear pore complex (NPC).

Its subcellular location is the nucleus. The protein localises to the nucleoplasm. It is found in the cytoplasm. Its function is as follows. Involved in mRNA export coupled transcription activation by association with both the AMEX and the SAGA complexes. The SAGA complex is a multiprotein complex that activates transcription by remodeling chromatin and mediating histone acetylation and deubiquitination. Within the SAGA complex, participates in a subcomplex that specifically deubiquitinates histone H2B. The SAGA complex is recruited to specific gene promoters by activators, where it is required for transcription. Required for nuclear receptor-mediated transactivation. Involved in transcription elongation by recruiting the THO complex onto nascent mRNA. The AMEX complex functions in docking export-competent ribonucleoprotein particles (mRNPs) to the nuclear entrance of the nuclear pore complex (nuclear basket). AMEX participates in mRNA export and accurate chromatin positioning in the nucleus by tethering genes to the nuclear periphery. This chain is Enhancer of yellow 2 transcription factor, found in Drosophila erecta (Fruit fly).